Consider the following 111-residue polypeptide: uncharacterized protein (111 aa).

Helical transmembrane passes span 22–42, 48–68, and 75–95; these read ASLICLHTLSLVSFSFLANIT, LTPAGIIESIPVVFTAVVSVL, and VLVTVSVVLFKISLGAIPKIL.

It is found in the membrane. This is an uncharacterized protein from Saccharomyces cerevisiae (strain ATCC 204508 / S288c) (Baker's yeast).